A 371-amino-acid polypeptide reads, in one-letter code: N-acetyldiaminopimelate deacetylase (371 aa).

Asp-68 is a catalytic residue. Glu-127 (proton acceptor) is an active-site residue.

The protein belongs to the peptidase M20A family. N-acetyldiaminopimelate deacetylase subfamily.

The catalysed reaction is N-acetyl-(2S,6S)-2,6-diaminopimelate + H2O = (2S,6S)-2,6-diaminopimelate + acetate. Its pathway is amino-acid biosynthesis; L-lysine biosynthesis via DAP pathway; LL-2,6-diaminopimelate from (S)-tetrahydrodipicolinate (acetylase route): step 3/3. Catalyzes the conversion of N-acetyl-diaminopimelate to diaminopimelate and acetate. This Listeria innocua serovar 6a (strain ATCC BAA-680 / CLIP 11262) protein is N-acetyldiaminopimelate deacetylase.